The chain runs to 980 residues: Peroxisomal ATPase PEX6 (980 aa).

Arg-119 is subject to Omega-N-methylarginine. Residues 470–477 (GPPGCGKT) and 744–751 (GPPGTGKT) contribute to the ATP site.

This sequence belongs to the AAA ATPase family. As to quaternary structure, interacts with PEX1; forming the PEX1-PEX6 AAA ATPase complex, which is composed of a heterohexamer formed by a trimer of PEX1-PEX6 dimers. Interacts with PEX26; interaction is direct and promotes recruitment to peroxisomal membranes. Interacts with ZFAND6. Expressed in the retina, at higher levels in the photoreceptor layer at the joint between the outer and inner segments.

The protein resides in the cytoplasm. Its subcellular location is the cytosol. The protein localises to the peroxisome membrane. It localises to the cell projection. It is found in the cilium. The protein resides in the photoreceptor outer segment. The enzyme catalyses ATP + H2O = ADP + phosphate + H(+). Component of the PEX1-PEX6 AAA ATPase complex, a protein dislocase complex that mediates the ATP-dependent extraction of the PEX5 receptor from peroxisomal membranes, an essential step for PEX5 recycling. Specifically recognizes PEX5 monoubiquitinated at 'Cys-11', and pulls it out of the peroxisome lumen through the PEX2-PEX10-PEX12 retrotranslocation channel. Extraction by the PEX1-PEX6 AAA ATPase complex is accompanied by unfolding of the TPR repeats and release of bound cargo from PEX5. The polypeptide is Peroxisomal ATPase PEX6 (Homo sapiens (Human)).